A 38-amino-acid chain; its full sequence is Turripeptide GpIAa (38 aa).

The protein belongs to the turripeptide family. In terms of tissue distribution, expressed by the venom duct.

The protein localises to the secreted. This is Turripeptide GpIAa from Cryptogemma periscelida (Atlantic gem-turris).